Consider the following 69-residue polypeptide: Beta-defensin 43 (69 aa).

The signal sequence occupies residues 1–22 (MRVLFSILGVLTLLSIVPLARS). 2 cysteine pairs are disulfide-bonded: cysteine 29/cysteine 56 and cysteine 35/cysteine 49.

Belongs to the beta-defensin family.

It localises to the secreted. In terms of biological role, has bactericidal activity. The sequence is that of Beta-defensin 43 (Defb43) from Mus musculus (Mouse).